The following is a 55-amino-acid chain: Large ribosomal subunit protein bL33 (55 aa).

The protein belongs to the bacterial ribosomal protein bL33 family.

This is Large ribosomal subunit protein bL33 from Sinorhizobium fredii (strain NBRC 101917 / NGR234).